Reading from the N-terminus, the 182-residue chain is MQTEHVILLNAQGVPTGTLEKYAAHTADTRLHLAFSSWLFNAKGQLLVTRRALSKKAWPGVWTNSVCGHPQLGESNEDAVIRRCRYELGVEITPPESIYPDFRYRATDPNGIVENEVCPVFAARTTSALQINDDEVMDYQWCDLADVLHGIDATPWAFSPWMVMQAANSEARKLLSAFAQHN.

Residues H25 and H32 each contribute to the Mn(2+) site. In terms of domain architecture, Nudix hydrolase spans 30 to 164 (RLHLAFSSWL…PWAFSPWMVM (135 aa)). The active site involves C67. H69 contacts Mn(2+). E87 contacts Mg(2+). 2 residues coordinate Mn(2+): E114 and E116. E116 is a catalytic residue.

Belongs to the IPP isomerase type 1 family. Homodimer. Requires Mg(2+) as cofactor. Mn(2+) is required as a cofactor.

It localises to the cytoplasm. It catalyses the reaction isopentenyl diphosphate = dimethylallyl diphosphate. It participates in isoprenoid biosynthesis; dimethylallyl diphosphate biosynthesis; dimethylallyl diphosphate from isopentenyl diphosphate: step 1/1. Its function is as follows. Catalyzes the 1,3-allylic rearrangement of the homoallylic substrate isopentenyl (IPP) to its highly electrophilic allylic isomer, dimethylallyl diphosphate (DMAPP). The chain is Isopentenyl-diphosphate Delta-isomerase from Escherichia coli O139:H28 (strain E24377A / ETEC).